The following is a 143-amino-acid chain: Sirohydrochlorin cobaltochelatase (143 aa).

Histidine 9 acts as the Proton acceptor in catalysis. Histidine 9 is a binding site for Co(2+). Histidine 9 provides a ligand contact to Ni(2+). Residues glutamate 45 and 70-75 (LAHGVH) contribute to the substrate site. Histidine 75 serves as a coordination point for Co(2+). Histidine 75 serves as a coordination point for Ni(2+).

This sequence belongs to the CbiX family. CbiXS subfamily. Homotetramer; dimer of dimers.

The catalysed reaction is Co-sirohydrochlorin + 2 H(+) = sirohydrochlorin + Co(2+). It catalyses the reaction Ni-sirohydrochlorin + 2 H(+) = sirohydrochlorin + Ni(2+). It participates in cofactor biosynthesis; adenosylcobalamin biosynthesis; cob(II)yrinate a,c-diamide from sirohydrochlorin (anaerobic route): step 1/10. Functionally, catalyzes the insertion of Co(2+) into sirohydrochlorin as part of the anaerobic pathway to cobalamin biosynthesis. Involved in the biosynthesis of the unique nickel-containing tetrapyrrole coenzyme F430, the prosthetic group of methyl-coenzyme M reductase (MCR), which plays a key role in methanogenesis and anaerobic methane oxidation. Catalyzes the insertion of Ni(2+) into sirohydrochlorin to yield Ni-sirohydrochlorin. This chain is Sirohydrochlorin cobaltochelatase, found in Methanopyrus kandleri (strain AV19 / DSM 6324 / JCM 9639 / NBRC 100938).